The sequence spans 61 residues: Large ribosomal subunit protein bL28 (61 aa).

The tract at residues 1-21 is disordered; sequence MAKDYVTGKKTTFGNKRSHAM.

Belongs to the bacterial ribosomal protein bL28 family.

This chain is Large ribosomal subunit protein bL28, found in Lactobacillus helveticus (strain DPC 4571).